Consider the following 415-residue polypeptide: Probable G-protein coupled receptor 19 (415 aa).

At 1 to 69 (MGFDHRMETD…LNPGEVATAS (69 aa)) the chain is on the extracellular side. N-linked (GlcNAc...) asparagine glycans are attached at residues Asn25 and Asn52. Residues 70-90 (IFFGALWLFSIFGNSLVCLVI) form a helical membrane-spanning segment. The Cytoplasmic segment spans residues 91-102 (HRSRRTQSTTNY). The helical transmembrane segment at 103 to 123 (FVVSMACADLLISVASTPFVV) threads the bilayer. Residues 124 to 152 (LQFTTGRWTLGSAMCKVVRYFQYLTPGVQ) are Extracellular-facing. Cys138 and Cys210 are oxidised to a cystine. A helical membrane pass occupies residues 153-173 (IYVLLSICIDRFYTIVYPLSF). Over 174-182 (KVSREKAKR) the chain is Cytoplasmic. Residues 183–203 (MIAASWILDAAFVTPVFFFYG) form a helical membrane-spanning segment. Residues 204–221 (SNWDSHCNYFLPPSWEGT) are Extracellular-facing. Residues 222–242 (AYTVIHFLVGFVIPSVLIILF) form a helical membrane-spanning segment. The Cytoplasmic segment spans residues 243–277 (YQKVIKYIWRIGTDGRTLRRTMNIVPRTKVKTVKM). A helical transmembrane segment spans residues 278-298 (FLLLNLVFLFSWLPFHVAQLW). Topologically, residues 299-309 (HPHEQDYRKSS) are extracellular. Residues 310-332 (LVFTAVTWVSFSSSASKPTLYSI) form a helical membrane-spanning segment. At 333–415 (YNANFRRGMK…INSNPPNTFV (83 aa)) the chain is on the cytoplasmic side.

The protein belongs to the G-protein coupled receptor 1 family. In terms of tissue distribution, abundant expression in the brain.

Its subcellular location is the cell membrane. Functionally, G-protein coupled receptor that plays a role in the regulation of circadian rhythms and energy metabolism. Participates in maintaining proper circadian gene expression in the suprachiasmatic nucleus (SCN), the locus of the master circadian clock in the brain. May function as a coordinator of aging-associated metabolic dysfunction, stress response, DNA integrity management, and eventual senescence. Upon binding to adropin, modulates mitochondrial energy metabolism via the p44/42-PDK4 signaling pathway, influencing pyruvate dehydrogenase activity. This chain is Probable G-protein coupled receptor 19 (Gpr19), found in Rattus norvegicus (Rat).